A 396-amino-acid chain; its full sequence is L-lactate dehydrogenase (396 aa).

The FMN hydroxy acid dehydrogenase domain maps to 1-380; the sequence is MIISAASDYR…SGDSLVQELG (380 aa). Tyr24 provides a ligand contact to substrate. Ser106 and Gln127 together coordinate FMN. A substrate-binding site is contributed by Tyr129. FMN is bound at residue Thr155. Arg164 serves as a coordination point for substrate. An FMN-binding site is contributed by Lys251. Residue His275 is the Proton acceptor of the active site. Arg278 serves as a coordination point for substrate. 306 to 330 is a binding site for FMN; the sequence is DSGIRNGLDVVRMIALGADTVLLGR.

The protein belongs to the FMN-dependent alpha-hydroxy acid dehydrogenase family. It depends on FMN as a cofactor.

The protein localises to the cell inner membrane. It catalyses the reaction (S)-lactate + A = pyruvate + AH2. Functionally, catalyzes the conversion of L-lactate to pyruvate. Is coupled to the respiratory chain. This is L-lactate dehydrogenase from Salmonella paratyphi C (strain RKS4594).